The primary structure comprises 554 residues: MGSSTNNTQSKATPSVLENEVNSSKSSVVSSTSSAKGLLRETTNHGTMETSSVQISESESRPSKMVLVLTLASSISGFMFGYDTGYISSALVQIGTDLSNKILTSGEKEFITSATSLGALLGAVVGGVLANLIGRRRVLLGSNIIFVVGTIIQLAARTVWTMIAGRFVLGWGVGIASLIAPLMISELAPAKYRGRLIVTNVIFITGGQLIAYFINWGLTRVSHGWRVSVGLCMVPPVLQFVLFWFLPDTPRFYVMNGNFEKARQVLRKVHVDPSDEFVNATIDEMIASDSTVPGNGPLQKAWKSIKIIHTTPGNFRALILACGLQGIQQFTGFNSLMYFSATIFETIGFHNATAVSIIIAATNFVFTGIAICIIDKVGRRRILLVGMPCMCISLIVCAVAFHYLNVDFSTGTVVSRGINGWGIVVIIGMILYVASYAIGIGNAAWVGVELFSDVNVRSIGAMYAACTNWAGSLVIASTFLTMLENITPTGTFSFFAGLCFIAFFFVYFLLPDTAGLELEETTDFLSNGFNVKQAAQLSKERKKHSKFAKSKPTV.

The segment covering 1-13 (MGSSTNNTQSKAT) has biased composition (polar residues). Residues 1-57 (MGSSTNNTQSKATPSVLENEVNSSKSSVVSSTSSAKGLLRETTNHGTMETSSVQISE) form a disordered region. Asparagine 6 and asparagine 22 each carry an N-linked (GlcNAc...) asparagine glycan. Residues 15 to 34 (SVLENEVNSSKSSVVSSTSS) are compositionally biased toward low complexity. Residues 44-57 (NHGTMETSSVQISE) show a composition bias toward polar residues. The next 6 membrane-spanning stretches (helical) occupy residues 65-85 (MVLVLTLASSISGFMFGYDTG), 110-130 (FITSATSLGALLGAVVGGVLA), 144-164 (IIFVVGTIIQLAARTVWTMIA), 167-187 (FVLGWGVGIASLIAPLMISEL), 196-216 (LIVTNVIFITGGQLIAYFINW), and 227-247 (VSVGLCMVPPVLQFVLFWFLP). N-linked (GlcNAc...) asparagine glycosylation occurs at asparagine 279. The chain crosses the membrane as a helical span at residues 313 to 332 (GNFRALILACGLQGIQQFTG). Asparagine 351 carries an N-linked (GlcNAc...) asparagine glycan. 5 helical membrane passes run 354–374 (AVSIIIAATNFVFTGIAICII), 382–402 (ILLVGMPCMCISLIVCAVAFH), 420–440 (GWGIVVIIGMILYVASYAIGI), 459–479 (IGAMYAACTNWAGSLVIASTF), and 490–510 (GTFSFFAGLCFIAFFFVYFLL).

Belongs to the major facilitator superfamily. Sugar transporter (TC 2.A.1.1) family.

The protein localises to the cell membrane. The catalysed reaction is myo-inositol(out) + H(+)(out) = myo-inositol(in) + H(+)(in). Its function is as follows. Major transporter for myo-inositol. The sequence is that of Myo-inositol transporter 1 from Candida albicans (strain SC5314 / ATCC MYA-2876) (Yeast).